We begin with the raw amino-acid sequence, 107 residues long: Integration host factor subunit beta (107 aa).

Residues 54–107 form a disordered region; that stretch reads NRRPARVGRNPKSGEKVQVPEKHVPHFKPGKELRERVDGRAGEPLKNDEPEDGQ. Over residues 65 to 101 the composition is skewed to basic and acidic residues; that stretch reads KSGEKVQVPEKHVPHFKPGKELRERVDGRAGEPLKND.

Belongs to the bacterial histone-like protein family. As to quaternary structure, heterodimer of an alpha and a beta chain.

This protein is one of the two subunits of integration host factor, a specific DNA-binding protein that functions in genetic recombination as well as in transcriptional and translational control. This Burkholderia thailandensis (strain ATCC 700388 / DSM 13276 / CCUG 48851 / CIP 106301 / E264) protein is Integration host factor subunit beta.